The primary structure comprises 718 residues: Ribosomal RNA large subunit methyltransferase K/L (718 aa).

Residues 44-155 form the THUMP domain; the sequence is DAYKVCIYSY…KQFVNVFLCL (112 aa).

Belongs to the methyltransferase superfamily. RlmKL family.

The protein resides in the cytoplasm. It carries out the reaction guanosine(2445) in 23S rRNA + S-adenosyl-L-methionine = N(2)-methylguanosine(2445) in 23S rRNA + S-adenosyl-L-homocysteine + H(+). The enzyme catalyses guanosine(2069) in 23S rRNA + S-adenosyl-L-methionine = N(2)-methylguanosine(2069) in 23S rRNA + S-adenosyl-L-homocysteine + H(+). Its function is as follows. Specifically methylates the guanine in position 2445 (m2G2445) and the guanine in position 2069 (m7G2069) of 23S rRNA. The sequence is that of Ribosomal RNA large subunit methyltransferase K/L from Francisella tularensis subsp. novicida (strain U112).